Consider the following 149-residue polypeptide: L-alanine exporter AlaE (149 aa).

Helical transmembrane passes span 16-36 (FAMVVYCSVVNMLIEIFLSGM), 46-66 (LVAIPVNILIAWPYGMYRDAI), 85-105 (VLAYVTFQSPVYVAILLTVGA), and 112-132 (AAVSSNIVISMLMGAVYGYFL).

Belongs to the AlaE exporter family.

Its subcellular location is the cell inner membrane. Its function is as follows. Exports L-alanine. In Citrobacter koseri (strain ATCC BAA-895 / CDC 4225-83 / SGSC4696), this protein is L-alanine exporter AlaE.